A 179-amino-acid polypeptide reads, in one-letter code: Large ribosomal subunit protein uL5 (179 aa).

Belongs to the universal ribosomal protein uL5 family. Part of the 50S ribosomal subunit; part of the 5S rRNA/L5/L18/L25 subcomplex. Contacts the 5S rRNA and the P site tRNA. Forms a bridge to the 30S subunit in the 70S ribosome.

This is one of the proteins that bind and probably mediate the attachment of the 5S RNA into the large ribosomal subunit, where it forms part of the central protuberance. In the 70S ribosome it contacts protein S13 of the 30S subunit (bridge B1b), connecting the 2 subunits; this bridge is implicated in subunit movement. Contacts the P site tRNA; the 5S rRNA and some of its associated proteins might help stabilize positioning of ribosome-bound tRNAs. The polypeptide is Large ribosomal subunit protein uL5 (Lysinibacillus sphaericus (strain C3-41)).